Consider the following 472-residue polypeptide: WD repeat-containing protein 88 (472 aa).

The tract at residues 1–22 (MASPPRCSPTAHDRECKLPPPS) is disordered. 7 WD repeats span residues 100-139 (GHEHAVSTCHFCVDDTKLLSGSYDCTVKLWDPVDGSVVRD), 143-182 (RPKAPVVECSITGDSSRVIAASYDKTVRAWDLETGKLLWK), 184-224 (RYDT…TVSV), 228-267 (HHTRSITSCCFDPDSQRVASVSLDRCIKIWDVTSQATLLT), 271-310 (AHSNAISNCCFTFSGHFLCTSSWDKNLKIWNVHTGEFRNC), 319-358 (GHEGSVSSCHFARDSSFLISGGFDRTVAIWDVAEGYRKLS), and 361-400 (GHNDWVMDVAISNNKKWILSASKDRTMRLWNIEEIDEIPL). The segment at 447-472 (LPADTSSSSSSSERENSPPPRGSKDD) is disordered. Basic and acidic residues predominate over residues 458-472 (SERENSPPPRGSKDD).

This is WD repeat-containing protein 88 (WDR88) from Homo sapiens (Human).